The following is a 37-amino-acid chain: Cytochrome b6-f complex subunit 5 (37 aa).

Residues 5-25 (LLSGIVLGLVPITLAGLFVTA) form a helical membrane-spanning segment.

The protein belongs to the PetG family. In terms of assembly, the 4 large subunits of the cytochrome b6-f complex are cytochrome b6, subunit IV (17 kDa polypeptide, PetD), cytochrome f and the Rieske protein, while the 4 small subunits are PetG, PetL, PetM and PetN. The complex functions as a dimer.

It localises to the plastid. The protein localises to the chloroplast thylakoid membrane. Its function is as follows. Component of the cytochrome b6-f complex, which mediates electron transfer between photosystem II (PSII) and photosystem I (PSI), cyclic electron flow around PSI, and state transitions. PetG is required for either the stability or assembly of the cytochrome b6-f complex. The sequence is that of Cytochrome b6-f complex subunit 5 from Gnetum parvifolium (Small-leaved jointfir).